The following is a 456-amino-acid chain: Cysteine--tRNA ligase (456 aa).

Cysteine 28 is a Zn(2+) binding site. The short motif at 30-40 is the 'HIGH' region element; the sequence is ITVYDHCHLGH. Zn(2+)-binding residues include cysteine 209, histidine 234, and glutamate 238. Residues 266–270 carry the 'KMSKS' region motif; the sequence is KMAKS. Residue lysine 269 participates in ATP binding.

Belongs to the class-I aminoacyl-tRNA synthetase family. As to quaternary structure, monomer. Zn(2+) is required as a cofactor.

It is found in the cytoplasm. The catalysed reaction is tRNA(Cys) + L-cysteine + ATP = L-cysteinyl-tRNA(Cys) + AMP + diphosphate. This Legionella pneumophila (strain Paris) protein is Cysteine--tRNA ligase.